The sequence spans 669 residues: DNA ligase (669 aa).

Residues 34-38 (DAEYD), 83-84 (SL), and E114 contribute to the NAD(+) site. Catalysis depends on K116, which acts as the N6-AMP-lysine intermediate. NAD(+) contacts are provided by R137, E171, K287, and K311. Zn(2+)-binding residues include C405, C408, C423, and C428. A BRCT domain is found at 591-669 (NVESYFAGKT…EERFLQELNK (79 aa)).

This sequence belongs to the NAD-dependent DNA ligase family. LigA subfamily. The cofactor is Mg(2+). Requires Mn(2+) as cofactor.

The catalysed reaction is NAD(+) + (deoxyribonucleotide)n-3'-hydroxyl + 5'-phospho-(deoxyribonucleotide)m = (deoxyribonucleotide)n+m + AMP + beta-nicotinamide D-nucleotide.. DNA ligase that catalyzes the formation of phosphodiester linkages between 5'-phosphoryl and 3'-hydroxyl groups in double-stranded DNA using NAD as a coenzyme and as the energy source for the reaction. It is essential for DNA replication and repair of damaged DNA. The polypeptide is DNA ligase (Bacillus cereus (strain ZK / E33L)).